Here is a 221-residue protein sequence, read N- to C-terminus: CDC5 pindle pole body anchor protein 1 (221 aa).

Positions 142-221 (KNIERDNLKP…PTEDSVPHAE (80 aa)) are disordered. 3 positions are modified to phosphoserine: serine 158, serine 170, and serine 175. The CDC5-binding motif lies at 165–170 (PLVTSS). Residues 166–188 (LVTSSPIHMSPLQSRQRPVSSLQ) are compositionally biased toward polar residues. The CLB3-docking signature appears at 189 to 195 (PPKGPNF). The CDC14-binding motif lies at 200–202 (PKL).

Interacts with CDC5 and CDC14. In terms of processing, phosphorylated by CLB3-CDK1 in metaphase which is required for correct localization at the nuclear envelop and the spindle pole body, and dephosphorylated by CDC14 in early anaphase.

The protein localises to the nucleus membrane. Its subcellular location is the cytoplasm. It localises to the cytoskeleton. It is found in the microtubule organizing center. The protein resides in the spindle pole body. Specialized component of the nuclear membrane that may be involved in the connection of the spindle pole body (SPB) to the nuclear envelope. Recruits CDC5 to spindle pole bodies in metaphase. In Saccharomyces cerevisiae (strain ATCC 204508 / S288c) (Baker's yeast), this protein is CDC5 pindle pole body anchor protein 1.